Here is a 229-residue protein sequence, read N- to C-terminus: Ribonuclease 3 (229 aa).

One can recognise an RNase III domain in the interval leucine 5–glycine 127. Glutamate 40 is a binding site for Mg(2+). The active site involves aspartate 44. The Mg(2+) site is built by aspartate 113 and glutamate 116. Glutamate 116 is an active-site residue. One can recognise a DRBM domain in the interval aspartate 154–valine 224.

This sequence belongs to the ribonuclease III family. Homodimer. It depends on Mg(2+) as a cofactor.

The protein resides in the cytoplasm. The catalysed reaction is Endonucleolytic cleavage to 5'-phosphomonoester.. In terms of biological role, digests double-stranded RNA. Involved in the processing of primary rRNA transcript to yield the immediate precursors to the large and small rRNAs (23S and 16S). Processes some mRNAs, and tRNAs when they are encoded in the rRNA operon. Processes pre-crRNA and tracrRNA of type II CRISPR loci if present in the organism. This is Ribonuclease 3 from Pseudomonas paraeruginosa (strain DSM 24068 / PA7) (Pseudomonas aeruginosa (strain PA7)).